The sequence spans 346 residues: Heparan sulfate glucosamine 3-O-sulfotransferase 5 (346 aa).

The Cytoplasmic portion of the chain corresponds to 1 to 12 (MLFKQQAWLRQK). Residues 13–32 (LLVLGSLAVGSLLYLVARVG) form a helical; Signal-anchor for type II membrane protein membrane-spanning segment. Residues 33-346 (SLDRLQPICP…QITGRTLNWP (314 aa)) are Lumenal-facing. 100–104 (KGGTR) serves as a coordination point for 3'-phosphoadenylyl sulfate. Residues 122–128 (EIHFFDN) and 155–158 (KSPA) each bind substrate. 3'-phosphoadenylyl sulfate-binding residues include arginine 183 and serine 191. Residue 226–227 (YK) participates in substrate binding. Asparagine 287 carries an N-linked (GlcNAc...) asparagine glycan. Tyrosine 293 is a binding site for 3'-phosphoadenylyl sulfate. An intrachain disulfide couples cysteine 294 to cysteine 304. 309–313 (KGRIH) lines the 3'-phosphoadenylyl sulfate pocket.

The protein belongs to the sulfotransferase 1 family. As to expression, highly expressed in skeletal muscle and fetal brain, and also found in adult brain, spinal cord, cerebellum and colon.

The protein localises to the golgi apparatus membrane. It catalyses the reaction alpha-D-glucosaminyl-[heparan sulfate](n) + 3'-phosphoadenylyl sulfate = 3-sulfo-alpha-D-glucosaminyl-[heparan sulfate](n) + adenosine 3',5'-bisphosphate + H(+). In terms of biological role, sulfotransferase that utilizes 3'-phospho-5'-adenylyl sulfate (PAPS) to catalyze the transfer of a sulfo group to position 3 of glucosamine residues in heparan. Catalyzes the rate limiting step in the biosynthesis of heparan sulfate (HSact). This modification is a crucial step in the biosynthesis of anticoagulant heparan sulfate as it completes the structure of the antithrombin pentasaccharide binding site. Also generates GlcUA-GlcNS or IdoUA-GlcNS and IdoUA2S-GlcNH2. The substrate-specific O-sulfation generates an enzyme-modified heparan sulfate which acts as a binding receptor to Herpes simplex virus-1 (HSV-1) and permits its entry. The sequence is that of Heparan sulfate glucosamine 3-O-sulfotransferase 5 (HS3ST5) from Homo sapiens (Human).